The primary structure comprises 376 residues: 2-hydroxypropyl-CoM lyase (376 aa).

The Zn(2+) site is built by His-218, Cys-220, and Cys-341.

This sequence belongs to the vitamin-B12 independent methionine synthase family. Homohexamer. Component I of the aliphatic epoxide carboxylation complex together with components II, III and IV. It depends on Zn(2+) as a cofactor.

The enzyme catalyses (R)-2-hydroxypropyl-coenzyme M = (R)-1,2-epoxypropane + coenzyme M. It carries out the reaction (S)-2-hydroxypropyl-coenzyme M = (S)-1,2-epoxypropane + coenzyme M. It functions in the pathway alkene metabolism; propylene degradation. Inhibited by methylepoxypropane. Inhibited by the zinc chelator 4-(2-pyridylazo)resorcinol (PAR), in the presence of p- (hydroxymercuri)benzenesulfonic acid (PMPS), and by EDTA. Not inhibited by the coenzyme M analog 2-bromoethanesulfonate (BES). Involved in aliphatic epoxide carboxylation. Catalyzes the addition of coenzyme M (CoM) to either R- or S-epoxypropane to form the thioether conjugate 2-hydroxypropyl-CoM. Catalyzes the reaction of CoM with R-epoxypropane at a rate approximately twice of that with S-epoxypropane. The CoM analogs 2-mercaptopropionate, 2-mercaptoethanol and cysteine substitute poorly for CoM as the thiol substrate. The protein is 2-hydroxypropyl-CoM lyase of Xanthobacter autotrophicus (strain ATCC BAA-1158 / Py2).